The chain runs to 193 residues: Large ribosomal subunit protein bL25 (193 aa).

The protein belongs to the bacterial ribosomal protein bL25 family. CTC subfamily. Part of the 50S ribosomal subunit; part of the 5S rRNA/L5/L18/L25 subcomplex. Contacts the 5S rRNA. Binds to the 5S rRNA independently of L5 and L18.

This is one of the proteins that binds to the 5S RNA in the ribosome where it forms part of the central protuberance. In Lachnoclostridium phytofermentans (strain ATCC 700394 / DSM 18823 / ISDg) (Clostridium phytofermentans), this protein is Large ribosomal subunit protein bL25.